The chain runs to 428 residues: Nocturnin (428 aa).

The N-terminal 72 residues, Met-1 to Tyr-72, are a transit peptide targeting the mitochondrion. The tract at residues Arg-21–Asn-66 is disordered. A compositionally biased stretch (low complexity) spans Ser-39–Arg-55. Glu-192 lines the Mg(2+) pocket. Substrate-binding positions include Glu-192, Lys-216–Trp-218, Asn-260, His-283–Ala-286, and Asp-321–Asn-323. The tract at residues Asn-340–Pro-350 is interaction with PPARG. Residue His-411 coordinates substrate.

It belongs to the CCR4/nocturin family. In terms of assembly, interacts with PPARG. It depends on Mg(2+) as a cofactor.

The protein resides in the cytoplasm. It localises to the nucleus. It is found in the perinuclear region. The protein localises to the mitochondrion. It catalyses the reaction NADP(+) + H2O = phosphate + NAD(+). It carries out the reaction NADPH + H2O = phosphate + NADH. Phosphatase which catalyzes the conversion of NADP(+) to NAD(+) and of NADPH to NADH. Shows a small preference for NADPH over NADP(+). Represses translation and promotes degradation of target mRNA molecules. Plays an important role in post-transcriptional regulation of metabolic genes under circadian control. Exerts a rhythmic post-transcriptional control of genes necessary for metabolic functions including nutrient absorption, glucose/insulin sensitivity, lipid metabolism, adipogenesis, inflammation and osteogenesis. Plays an important role in favoring adipogenesis over osteoblastogenesis and acts as a key regulator of the adipogenesis/osteogenesis balance. Promotes adipogenesis by facilitating PPARG nuclear translocation which activates its transcriptional activity. Regulates circadian expression of NOS2 in the liver and negatively regulates the circadian expression of IGF1 in the bone. Critical for proper development of early embryos. This is Nocturnin from Rattus norvegicus (Rat).